The primary structure comprises 202 residues: Endothelin-1 (202 aa).

The signal sequence occupies residues 1 to 25 (MDYLPVLFSLLLVVFQGAPEAAVLG). Positions 26–50 (AELSTGPDSGGEKPAPSAPWRPRRS) are excised as a propeptide. Positions 28–48 (LSTGPDSGGEKPAPSAPWRPR) are disordered. 2 disulfides stabilise this stretch: Cys53-Cys67 and Cys55-Cys63. The propeptide occupies 74–202 (VNTPEHIVPY…EKKVTHNRTH (129 aa)). Positions 110–124 (CQCASQKDKKCWTFC) are endothelin-like.

The protein belongs to the endothelin/sarafotoxin family.

The protein localises to the secreted. In terms of biological role, endothelins are endothelium-derived vasoconstrictor peptides. Probable ligand for G-protein coupled receptors EDNRA and EDNRB which activates PTK2B, BCAR1, BCAR3 and, GTPases RAP1 and RHOA cascade in glomerular mesangial cells. Also binds the DEAR/FBXW7-AS1 receptor. Promotes mesenteric arterial wall remodeling via activation of ROCK signaling and subsequent colocalization of NFATC3 with F-actin filaments. NFATC3 then translocates to the nucleus where it subsequently promotes the transcription of the smooth muscle hypertrophy and differentiation marker ACTA2. The protein is Endothelin-1 (EDN1) of Felis catus (Cat).